The following is a 601-amino-acid chain: Beta-phellandrene synthase (601 aa).

A chloroplast-targeting transit peptide spans 1-35 (MSTISIHHVGILRNPLPSKNKRALINNPWSLSLPR). Mn(2+) contacts are provided by aspartate 356 and aspartate 360. The DDXXD motif motif lies at 356–360 (DDVYD). 2 homodimerization regions span residues 362-368 (YGTLDEL) and 434-471 (EAEWYESGYAPSLEEYLSIATISIGLIPIVIPLDLSIP). Residues aspartate 499 and glutamate 507 each coordinate Mn(2+).

It belongs to the terpene synthase family. In terms of assembly, homodimer. Mn(2+) serves as cofactor. Requires Mg(2+) as cofactor. In terms of tissue distribution, expressed in peltate glandular trichomes. Present at low levels in flowers and stems.

The protein localises to the plastid. The protein resides in the chloroplast. It catalyses the reaction (2E)-geranyl diphosphate = beta-phellandrene + diphosphate. The catalysed reaction is (2E)-geranyl diphosphate = (1R,5R)-sabinene + diphosphate. It participates in secondary metabolite biosynthesis; terpenoid biosynthesis. In terms of biological role, involved in the biosynthesis of phenolic monoterpenes natural products. Monoterpene synthase that catalyzes mainly the formation of olefins such as sabinene and beta-phellandrene, and minor amounts of other monoterpenes (e.g. myrcene, gamma-terpinene, alpha-thujene and alpha-pinene) from geranyl diphosphate (GPP). The protein is Beta-phellandrene synthase of Origanum vulgare (Wild marjoram).